The following is a 432-amino-acid chain: Glutamyl-tRNA reductase (432 aa).

Residues 49–52 (TCNR), S101, 106–108 (EPQ), and Q112 each bind substrate. C50 (nucleophile) is an active-site residue. 181–186 (GAGETI) is a binding site for NADP(+). Positions 407–432 (FPEKPGYQHPPIATPIVRTDDADPAP) are disordered.

It belongs to the glutamyl-tRNA reductase family. In terms of assembly, homodimer.

It carries out the reaction (S)-4-amino-5-oxopentanoate + tRNA(Glu) + NADP(+) = L-glutamyl-tRNA(Glu) + NADPH + H(+). Its pathway is porphyrin-containing compound metabolism; protoporphyrin-IX biosynthesis; 5-aminolevulinate from L-glutamyl-tRNA(Glu): step 1/2. Catalyzes the NADPH-dependent reduction of glutamyl-tRNA(Glu) to glutamate 1-semialdehyde (GSA). The protein is Glutamyl-tRNA reductase of Xanthomonas oryzae pv. oryzae (strain MAFF 311018).